The following is a 697-amino-acid chain: Elongation factor G 1 (697 aa).

Positions 8-283 constitute a tr-type G domain; the sequence is ERYRNFGIMA…AVVDFLPSPV (276 aa). Residues 17 to 24, 81 to 85, and 135 to 138 contribute to the GTP site; these read AHIDAGKT, DTPGH, and NKMD.

It belongs to the TRAFAC class translation factor GTPase superfamily. Classic translation factor GTPase family. EF-G/EF-2 subfamily.

The protein localises to the cytoplasm. Catalyzes the GTP-dependent ribosomal translocation step during translation elongation. During this step, the ribosome changes from the pre-translocational (PRE) to the post-translocational (POST) state as the newly formed A-site-bound peptidyl-tRNA and P-site-bound deacylated tRNA move to the P and E sites, respectively. Catalyzes the coordinated movement of the two tRNA molecules, the mRNA and conformational changes in the ribosome. The polypeptide is Elongation factor G 1 (Anaeromyxobacter dehalogenans (strain 2CP-C)).